Reading from the N-terminus, the 355-residue chain is Methyltransferase FUS9 (355 aa).

The S-adenosyl-L-homocysteine site is built by tyrosine 18, asparagine 63, aspartate 86, serine 123, and phenylalanine 124. Residue phenylalanine 231 coordinates Mg(2+).

This sequence belongs to the methyltransferase superfamily. Type-7 methyltransferase family. The cofactor is Mg(2+).

It participates in mycotoxin biosynthesis. Methyltransferase; part of the gene cluster that mediates the biosynthesis of the mycotoxin fusarin C. Within the cluster, FUS1, FUS2, FUS8 and FUS9 are sufficient for fusarin production. The roles of the other FUS members are yet undetermined. The fusarin C synthetase FUS1 is responsible for the condensation of one acetyl-coenzyme A (CoA) unit with six malonyl-CoA units and the amide linkage of the arising heptaketide and homoserine, subsequently releasing the first intermediate, prefusarin, as an alcohol with an open ring structure. The cytochrome P450 monooxygenase FUS8 participates in multiple oxidation processes at carbon C-20 and is able to use the FUS1 product as substrate, resulting in formation of 20-hydroxy-prefusarin. This reaction seems to be essential before the 2-pyrrolidone ring closure can be catalyzed by FUS2, generating 20-hydroxy-fusarin. FUS8 is able to further oxidizes carbon C-20 after ring closure, resulting in the formation of carboxy-fusarin C. As the last step, FUS9 methylates the hydroxyl group at C-21 to generate fusarin C. Fusarin C can then rearrange to epi-fusarin C, the (z)-isomers, and fusarin A and fusarin D. The protein is Methyltransferase FUS9 of Gibberella fujikuroi (strain CBS 195.34 / IMI 58289 / NRRL A-6831) (Bakanae and foot rot disease fungus).